Here is a 263-residue protein sequence, read N- to C-terminus: Endonuclease 8 (263 aa).

Pro2 serves as the catalytic Schiff-base intermediate with DNA. The active-site Proton donor is the Glu3. Lys53 functions as the Proton donor; for beta-elimination activity in the catalytic mechanism. DNA is bound by residues Gln70, Arg125, and Asn169. Residues 229–263 (KVFHRDGEACERCGGIIEKTTLSSRPFYWCPHCQK) form an FPG-type zinc finger. Arg253 (proton donor; for delta-elimination activity) is an active-site residue.

This sequence belongs to the FPG family. It depends on Zn(2+) as a cofactor.

It catalyses the reaction 2'-deoxyribonucleotide-(2'-deoxyribose 5'-phosphate)-2'-deoxyribonucleotide-DNA = a 3'-end 2'-deoxyribonucleotide-(2,3-dehydro-2,3-deoxyribose 5'-phosphate)-DNA + a 5'-end 5'-phospho-2'-deoxyribonucleoside-DNA + H(+). Involved in base excision repair of DNA damaged by oxidation or by mutagenic agents. Acts as a DNA glycosylase that recognizes and removes damaged bases. Has a preference for oxidized pyrimidines, such as thymine glycol, 5,6-dihydrouracil and 5,6-dihydrothymine. Has AP (apurinic/apyrimidinic) lyase activity and introduces nicks in the DNA strand. Cleaves the DNA backbone by beta-delta elimination to generate a single-strand break at the site of the removed base with both 3'- and 5'-phosphates. This chain is Endonuclease 8, found in Salmonella schwarzengrund (strain CVM19633).